Consider the following 583-residue polypeptide: Fumarate reductase flavoprotein subunit (583 aa).

FAD contacts are provided by residues 11–15 (GGGGA), 35–37 (VSK), 43–51 (SHTVSAEGG), 155–157 (WFA), and Asp-211. A Tele-8alpha-FAD histidine modification is found at His-44. Active-site residues include His-232 and Arg-248. FAD contacts are provided by residues 353–354 (HY), Glu-377, and 388–394 (RLGSNSL).

The protein belongs to the FAD-dependent oxidoreductase 2 family. FRD/SDH subfamily. In terms of assembly, part of an enzyme complex containing four subunits: a flavoprotein (FrdA), an iron-sulfur protein (FrdB), and two hydrophobic anchor proteins (FrdC and FrdD). FAD is required as a cofactor.

The protein localises to the cell membrane. It catalyses the reaction a quinone + succinate = fumarate + a quinol. The catalysed reaction is a menaquinone + succinate = a menaquinol + fumarate. This is Fumarate reductase flavoprotein subunit (frdA) from Mycobacterium tuberculosis (strain CDC 1551 / Oshkosh).